Consider the following 278-residue polypeptide: MNNILSEEVLNVTDFTTSRQLTLWKREDLQSSQLDDVAEEVPVALVYNGISHVVMMASPKDLTHFAMGFSLSEGIIDSPREIYGMDVVPSCNGLEVQIDLSSRRFMGLKARRRALAGRTGCGVCGVEQLNDIGKPVQPLPFSQTFNLGNLDRALKHLNDFQPTGKLTGCTHAAAWVMPSGELAGGHEDVGRHVALDKLLGRRATEGEEWRQGAALVSSRASYEMVQKSAMCGVEILFAVSAATTLAVDVAERCNLTLVGFCKPGRATIYTHPQRLIAD.

Cys121 serves as the catalytic Cysteine persulfide intermediate. 260–265 (FCKPGR) contacts Mo-bis(molybdopterin guanine dinucleotide).

This sequence belongs to the FdhD family.

Its subcellular location is the cytoplasm. Its function is as follows. Required for formate dehydrogenase (FDH) activity. Acts as a sulfur carrier protein that transfers sulfur from IscS to the molybdenum cofactor prior to its insertion into FDH. This is Sulfur carrier protein FdhD from Salmonella typhi.